The following is a 358-amino-acid chain: Aromatic amino acid aminotransferase (358 aa).

Lys214 bears the N6-(pyridoxal phosphate)lysine mark.

It belongs to the class-II pyridoxal-phosphate-dependent aminotransferase family. Homodimer. Requires pyridoxal 5'-phosphate as cofactor.

It catalyses the reaction an aromatic L-alpha-amino acid + 2-oxoglutarate = an aromatic oxo-acid + L-glutamate. Aminotransferase that catalyzes the conversion of aromatic amino acids and 2-oxoglutarate into corresponding aromatic oxo acids and L-glutamate. The chain is Aromatic amino acid aminotransferase from Rhodococcus jostii (strain RHA1).